The chain runs to 508 residues: UBX domain-containing protein 4 (508 aa).

Positions 1 to 200 (MLWFQGAIPA…PAEDLNIRVE (200 aa)) are interaction with UBQLN1. Residues 1-413 (MLWFQGAIPA…VHSSSGDIWT (413 aa)) are Cytoplasmic-facing. Polar residues-rich tracts occupy residues 117 to 151 (SETS…QSRN) and 160 to 187 (TSDT…SGCS). The segment at 117 to 196 (SETSVANGSQ…SDQRPAEDLN (80 aa)) is disordered. One can recognise a UBX domain in the interval 315–393 (ERSTVARIQF…ELAPSASVVV (79 aa)). Residues 414-434 (LLGTVLYPFLAIWRLISNFLF) lie within the membrane without spanning it. At 435-508 (SNPPPTQTSV…TWNGNSTQQM (74 aa)) the chain is on the cytoplasmic side. The disordered stretch occupies residues 440-508 (TQTSVRVTSS…TWNGNSTQQM (69 aa)). Polar residues predominate over residues 441 to 458 (QTSVRVTSSEPPNPASSS). Basic and acidic residues predominate over residues 459 to 491 (KSEKREPVRKRVLEKRGDDFKKEGKIYRLRTQD). Residue threonine 489 is modified to Phosphothreonine. The span at 498–508 (NTWNGNSTQQM) shows a compositional bias: polar residues.

In terms of assembly, directly interacts with VCP. Interacts with UBQLN1. Forms a complex with VCP and UBQLN1.

The protein localises to the endoplasmic reticulum membrane. The protein resides in the nucleus envelope. Functionally, involved in endoplasmic reticulum-associated protein degradation (ERAD). Acts as a platform to recruit both UBQLN1 and VCP to the ER during ERAD. In Pongo abelii (Sumatran orangutan), this protein is UBX domain-containing protein 4 (UBXN4).